Here is a 160-residue protein sequence, read N- to C-terminus: UPF0262 protein Mmar10_1128 (160 aa).

Belongs to the UPF0262 family.

The polypeptide is UPF0262 protein Mmar10_1128 (Maricaulis maris (strain MCS10) (Caulobacter maris)).